Here is a 251-residue protein sequence, read N- to C-terminus: Pyruvate formate-lyase-activating enzyme (251 aa).

Residues 15–244 (VDGPGLRYIL…KAAYRYVNFK (230 aa)) enclose the Radical SAM core domain. [4Fe-4S] cluster contacts are provided by Cys29, Cys33, and Cys36. Residues 35–37 (YCH), Gly79, 134–136 (DIK), and His207 each bind S-adenosyl-L-methionine.

Belongs to the organic radical-activating enzymes family. [4Fe-4S] cluster is required as a cofactor.

The protein resides in the cytoplasm. It carries out the reaction glycyl-[formate C-acetyltransferase] + reduced [flavodoxin] + S-adenosyl-L-methionine = glycin-2-yl radical-[formate C-acetyltransferase] + semiquinone [flavodoxin] + 5'-deoxyadenosine + L-methionine + H(+). In terms of biological role, activation of pyruvate formate-lyase under anaerobic conditions by generation of an organic free radical, using S-adenosylmethionine and reduced flavodoxin as cosubstrates to produce 5'-deoxy-adenosine. The protein is Pyruvate formate-lyase-activating enzyme (pflA) of Staphylococcus aureus (strain N315).